A 512-amino-acid chain; its full sequence is Apolipoprotein N-acyltransferase (512 aa).

6 helical membrane-spanning segments follow: residues 5 to 25 (LDKY…FAAA), 56 to 76 (FAVS…FYWI), 92 to 112 (VPLT…CFWL), 118 to 138 (LPRG…TEFA), 168 to 188 (LGGI…LVLA), and 195 to 215 (SGKR…GYTA). Residues 233–477 (LQGNIDQTLK…ETVLEGHIKG (245 aa)) enclose the CN hydrolase domain. The Proton acceptor role is filled by Glu-271. Lys-337 is an active-site residue. Cys-389 (nucleophile) is an active-site residue. Residues 487-507 (TGSSWWLMGILALAALILFIF) form a helical membrane-spanning segment.

It belongs to the CN hydrolase family. Apolipoprotein N-acyltransferase subfamily.

Its subcellular location is the cell inner membrane. The catalysed reaction is N-terminal S-1,2-diacyl-sn-glyceryl-L-cysteinyl-[lipoprotein] + a glycerophospholipid = N-acyl-S-1,2-diacyl-sn-glyceryl-L-cysteinyl-[lipoprotein] + a 2-acyl-sn-glycero-3-phospholipid + H(+). Its pathway is protein modification; lipoprotein biosynthesis (N-acyl transfer). Functionally, catalyzes the phospholipid dependent N-acylation of the N-terminal cysteine of apolipoprotein, the last step in lipoprotein maturation. The protein is Apolipoprotein N-acyltransferase of Neisseria meningitidis serogroup B (strain ATCC BAA-335 / MC58).